A 511-amino-acid chain; its full sequence is Maturase K (511 aa).

It belongs to the intron maturase 2 family. MatK subfamily.

It localises to the plastid. The protein resides in the chloroplast. Its function is as follows. Usually encoded in the trnK tRNA gene intron. Probably assists in splicing its own and other chloroplast group II introns. The sequence is that of Maturase K from Poa pratensis (Kentucky bluegrass).